We begin with the raw amino-acid sequence, 296 residues long: dTDP-rhamnosyl transferase RfbF (296 aa).

The protein belongs to the glycosyltransferase 2 family.

It functions in the pathway bacterial outer membrane biogenesis; lipopolysaccharide biosynthesis. The polypeptide is dTDP-rhamnosyl transferase RfbF (rfbF) (Shigella flexneri).